A 981-amino-acid polypeptide reads, in one-letter code: Calsyntenin-1 (981 aa).

A signal peptide spans Met-1–Ala-28. Residues Ala-29–Thr-859 are Extracellular-facing. 2 Cadherin domains span residues Leu-38–Phe-164 and Lys-165–Trp-265. Residues Asn-346, Asn-366, and Asn-515 are each glycosylated (N-linked (GlcNAc...) asparagine). The helical transmembrane segment at Ala-860–Phe-880 threads the bilayer. The Cytoplasmic segment spans residues Arg-881 to Tyr-981. Residues Met-915–Tyr-981 are disordered. Acidic residues predominate over residues Glu-925 to Gln-960. The segment covering Asp-962–Tyr-981 has biased composition (polar residues).

It belongs to the calsyntenin family. As to quaternary structure, directly interacts with APBA2. Forms a tripartite complex with APBA2 and APP. Interacts with KLC1. Interacts with APBB1; this interaction stabilizes AlcICD metabolism. In terms of assembly, interacts with PSEN1. Post-translationally, proteolytically processed under normal cellular conditions. A primary zeta-cleavage generates a large extracellular (soluble) N-terminal domain (sAlc) and a short C-terminal transmembrane fragment (CTF1). A secondary cleavage catalyzed by presenilin gamma-secretase within the transmembrane domain releases the beta-Alc-alpha chain in the extracellular milieu and produces an intracellular fragment (AlcICD). This processing is strongly suppressed in the tripartite complex formed with APBA2 and APP, which seems to prevent the association with PSEN1. As to expression, expressed in the brain and, a lower level, in the heart, skeletal muscle, kidney and placenta. Accumulates in dystrophic neurites around the amyloid core of Alzheimer disease senile plaques (at protein level).

The protein resides in the postsynaptic cell membrane. Its subcellular location is the endoplasmic reticulum membrane. The protein localises to the golgi apparatus membrane. It is found in the cell projection. It localises to the neuron projection. The protein resides in the nucleus. Postsynaptic adhesion molecule that binds to presynaptic neurexins to mediate both excitatory and inhibitory synapse formation. Promotes synapse development by acting as a cell adhesion molecule at the postsynaptic membrane, which associates with neurexin-alpha at the presynaptic membrane. Also functions as a cargo in axonal anterograde transport by acting as a molecular adapter that promotes KLC1 association with vesicles. Complex formation with APBA2 and APP, stabilizes APP metabolism and enhances APBA2-mediated suppression of beta-APP40 secretion, due to the retardation of intracellular APP maturation. Its function is as follows. As intracellular fragment AlcICD, suppresses APBB1-dependent transactivation stimulated by APP C-terminal intracellular fragment (AICD), most probably by competing with AICD for APBB1-binding. Functionally, in complex with APBA2 and C99, a C-terminal APP fragment, abolishes C99 interaction with PSEN1 and thus APP C99 cleavage by gamma-secretase, most probably through stabilization of the direct interaction between APBA2 and APP. This is Calsyntenin-1 from Homo sapiens (Human).